Reading from the N-terminus, the 41-residue chain is Cytochrome b559 subunit beta (41 aa).

A helical membrane pass occupies residues 16 to 32; it reads WLAIHALAVPTVFFLGS. Heme is bound at residue histidine 20.

This sequence belongs to the PsbE/PsbF family. Heterodimer of an alpha subunit and a beta subunit. PSII is composed of 1 copy each of membrane proteins PsbA, PsbB, PsbC, PsbD, PsbE, PsbF, PsbH, PsbI, PsbJ, PsbK, PsbL, PsbM, PsbT, PsbX, PsbY, PsbZ, Psb30/Ycf12, at least 3 peripheral proteins of the oxygen-evolving complex and a large number of cofactors. It forms dimeric complexes. Requires heme b as cofactor.

The protein resides in the plastid. It localises to the chloroplast thylakoid membrane. Its function is as follows. This b-type cytochrome is tightly associated with the reaction center of photosystem II (PSII). PSII is a light-driven water:plastoquinone oxidoreductase that uses light energy to abstract electrons from H(2)O, generating O(2) and a proton gradient subsequently used for ATP formation. It consists of a core antenna complex that captures photons, and an electron transfer chain that converts photonic excitation into a charge separation. The chain is Cytochrome b559 subunit beta from Oltmannsiellopsis viridis (Marine flagellate).